The chain runs to 592 residues: Proline--tRNA ligase (592 aa).

The protein belongs to the class-II aminoacyl-tRNA synthetase family. ProS type 1 subfamily. In terms of assembly, homodimer.

It is found in the cytoplasm. It carries out the reaction tRNA(Pro) + L-proline + ATP = L-prolyl-tRNA(Pro) + AMP + diphosphate. Its function is as follows. Catalyzes the attachment of proline to tRNA(Pro) in a two-step reaction: proline is first activated by ATP to form Pro-AMP and then transferred to the acceptor end of tRNA(Pro). As ProRS can inadvertently accommodate and process non-cognate amino acids such as alanine and cysteine, to avoid such errors it has two additional distinct editing activities against alanine. One activity is designated as 'pretransfer' editing and involves the tRNA(Pro)-independent hydrolysis of activated Ala-AMP. The other activity is designated 'posttransfer' editing and involves deacylation of mischarged Ala-tRNA(Pro). The misacylated Cys-tRNA(Pro) is not edited by ProRS. The polypeptide is Proline--tRNA ligase (Corynebacterium urealyticum (strain ATCC 43042 / DSM 7109)).